Reading from the N-terminus, the 648-residue chain is Macrolide export ATP-binding/permease protein MacB (648 aa).

The ABC transporter domain occupies 5–243 (LELKDIRRSY…AGGTEPVVNT (239 aa)). An ATP-binding site is contributed by 41 to 48 (GASGSGKS). The next 4 membrane-spanning stretches (helical) occupy residues 273 to 293 (LLTM…VVVG), 523 to 543 (LFLT…VMNI), 576 to 596 (AVLV…LIAF), and 600 to 620 (LFLP…AFLC).

It belongs to the ABC transporter superfamily. Macrolide exporter (TC 3.A.1.122) family. Homodimer. Part of the tripartite efflux system MacAB-TolC, which is composed of an inner membrane transporter, MacB, a periplasmic membrane fusion protein, MacA, and an outer membrane component, TolC. The complex forms a large protein conduit and can translocate molecules across both the inner and outer membranes. Interacts with MacA.

Its subcellular location is the cell inner membrane. In terms of biological role, part of the tripartite efflux system MacAB-TolC. MacB is a non-canonical ABC transporter that contains transmembrane domains (TMD), which form a pore in the inner membrane, and an ATP-binding domain (NBD), which is responsible for energy generation. Confers resistance against macrolides. This chain is Macrolide export ATP-binding/permease protein MacB, found in Shigella boydii serotype 4 (strain Sb227).